Here is a 476-residue protein sequence, read N- to C-terminus: MSGARCRTLYPFSGERHGQGLRFAAGELITLLQVPDGGWWEGEKEDGLRGWFPASYVQLLEKPGMVPPPPGEESQTVILPPGWQSYLSPQGRRYYVNTTTNETTWERPSSSPGIPASPGSHRSSLPPTVNGYHASGTPAHPPETAHMSVRKSTGDSQNLGSSSPSKKQSKENTITINCVTFPHPDTMPEQQLLKPTEWSYCDYFWADKKDPQGNGTVAGFELLLQKQLKGKQMQKEMSEFIRERIKIEEDYAKNLAKLSQNSLASQEEGSLGEAWAQVKKSLADEAEVHLKFSAKLHSEVEKPLMNFRENFKKDMKKCDHHIADLRKQLASRYASVEKARKALTERQRDLEMKTQQLEIKLSNKTEEDIKKARRKSTQAGDDLMRCVDLYNQAQSKWFEEMVTTTLELERLEVERVEMIRQHLCQYTQLRHETDMFNQSTVEPVDQLLRKVDPAKDRELWVREHKTGNIRPVDMEI.

Positions 1–62 (MSGARCRTLY…PASYVQLLEK (62 aa)) constitute an SH3 domain. Residues 77–110 (VILPPGWQSYLSPQGRRYYVNTTTNETTWERPSS) enclose the WW domain. The disordered stretch occupies residues 100–171 (TNETTWERPS…SSPSKKQSKE (72 aa)). Over residues 108-120 (PSSSPGIPASPGS) the composition is skewed to low complexity. Residues serine 117 and serine 163 each carry the phosphoserine modification. The segment covering 150–171 (RKSTGDSQNLGSSSPSKKQSKE) has biased composition (polar residues). Residues 196-456 (TEWSYCDYFW…LLRKVDPAKD (261 aa)) form the F-BAR domain. Residues 309 to 419 (ENFKKDMKKC…RLEVERVEMI (111 aa)) are a coiled coil.

The protein resides in the cytoplasm. May play a role in promoting maturation and morphological differentiation of cerebellar neurons. The protein is Growth arrest-specific protein 7 (GAS7) of Homo sapiens (Human).